The following is a 490-amino-acid chain: UDP-glycosyltransferase 84A1 (490 aa).

Catalysis depends on His30, which acts as the Proton acceptor. His30 lines the an anthocyanidin pocket. Gln358, His373, Trp376, Asn377, Ser378, and Glu381 together coordinate UDP-alpha-D-glucose. Residue Gly396 participates in an anthocyanidin binding. Positions 397 and 398 each coordinate UDP-alpha-D-glucose.

The protein belongs to the UDP-glycosyltransferase family. Expressed in roots, flowers and siliques.

The enzyme catalyses (E)-4-coumarate + UDP-alpha-D-glucose = 4-O-(beta-D-glucosyl)-trans-4-coumarate + UDP + H(+). It carries out the reaction (E)-ferulate + UDP-alpha-D-glucose = 1-O-[(E)-feruloyl]-beta-D-glucose + UDP. The catalysed reaction is (E)-caffeate + UDP-alpha-D-glucose = 1-O-[(E)-caffeoyl]-beta-D-glucose + UDP. It catalyses the reaction (E)-sinapate + UDP-alpha-D-glucose = 1-O-(trans-sinapoyl)-beta-D-glucose + UDP. The enzyme catalyses (E)-cinnamate + UDP-alpha-D-glucose = 1-O-(trans-cinnamoyl)-beta-D-glucose + UDP. UDP-glucosyltransferase that forms glucose esters with phenylpropanoids. Glucosylates 4-coumarate, ferulate, caffeate, sinapate and cinnamate. Can glucosylate the phytotoxic xenobiotic compound 2,4,5-trichlorophenol (TCP). The polypeptide is UDP-glycosyltransferase 84A1 (Arabidopsis thaliana (Mouse-ear cress)).